Reading from the N-terminus, the 344-residue chain is Selenide, water dikinase (344 aa).

Cysteine 16 is an active-site residue. ATP is bound by residues lysine 19 and 47–49 (SRD). Residue aspartate 50 coordinates Mg(2+). ATP contacts are provided by residues aspartate 67, aspartate 90, and 138–140 (GHS). Mg(2+) is bound at residue aspartate 90. Aspartate 226 provides a ligand contact to Mg(2+).

Belongs to the selenophosphate synthase 1 family. Class I subfamily. In terms of assembly, homodimer. It depends on Mg(2+) as a cofactor.

It catalyses the reaction hydrogenselenide + ATP + H2O = selenophosphate + AMP + phosphate + 2 H(+). Synthesizes selenophosphate from selenide and ATP. This Pseudomonas aeruginosa (strain ATCC 15692 / DSM 22644 / CIP 104116 / JCM 14847 / LMG 12228 / 1C / PRS 101 / PAO1) protein is Selenide, water dikinase.